Here is a 2570-residue protein sequence, read N- to C-terminus: Highly reducing polyketide synthase tstA (2570 aa).

Residues alanine 16 to asparagine 443 enclose the Ketosynthase family 3 (KS3) domain. Active-site for beta-ketoacyl synthase activity residues include cysteine 191, histidine 326, and histidine 366. The segment at histidine 458 to histidine 478 is disordered. The span at threonine 464 to histidine 478 shows a compositional bias: low complexity. The Malonyl-CoA:ACP transacylase (MAT) domain occupies phenylalanine 567 to alanine 898. Positions threonine 965–lysine 1103 are N-terminal hotdog fold. The PKS/mFAS DH domain occupies threonine 965–aspartate 1293. The active-site Proton acceptor; for dehydratase activity is histidine 997. Positions arginine 1133 to aspartate 1293 are C-terminal hotdog fold. The active-site Proton donor; for dehydratase activity is aspartate 1198. Residues leucine 1343–tyrosine 1645 form a methyltransferase (CMeT) domain region. Positions glycine 1866–glycine 2178 constitute an Enoyl reductase (ER) domain. Positions alanine 2202–serine 2379 constitute a Ketoreductase (KR) domain. Positions aspartate 2482 to serine 2559 constitute a Carrier domain. O-(pantetheine 4'-phosphoryl)serine is present on serine 2519.

Requires pantetheine 4'-phosphate as cofactor.

The protein operates within secondary metabolite biosynthesis. In terms of biological role, highly reducing polyketide synthase; part of the gene cluster that mediates the biosynthesis of the antihypercholesterolemic agents phomoidrides which are dimeric anhydrides. The pathway begins with the highly reducing polyketide synthase tstA that catalyzes the formation of a C12-fatty acyl-ACP, starting from one acetate and 5 malonate units. The hydrolase tstM is involved in the release of the C12-fatty acyl chain from tstA. The alkylcitrate synthase (ACS) tstJ and the alkylcitrate dehydratase (ACDH) tstI then give rise to decarboxylated monomeric anhydrides by coupling the C12-fatty acyl chain with oxalacetic acid. The cyclase tstC is responsible for the dimerization of the monomeric anhydrides which leads to the production of prephomoidride that contains the characteristic bicyclo[4.3.1]deca-1,6-diene system of phomoidrides. Iterative oxidation catalyzed by the alpha-ketoglutarate-dependent dioxygenase tstK produced then phomoidride A. Finally, the methyltransferase tstE converts phomoidride A to phomoidride B via an acetalization reaction. The phosphatidylethanolamine-binding protein tstB and tstN are not essential for dimerization and their functions have still to be determined. The sequence is that of Highly reducing polyketide synthase tstA from Talaromyces stipitatus (strain ATCC 10500 / CBS 375.48 / QM 6759 / NRRL 1006) (Penicillium stipitatum).